A 389-amino-acid polypeptide reads, in one-letter code: Sulfate adenylyltransferase (389 aa).

It belongs to the sulfate adenylyltransferase family.

It catalyses the reaction sulfate + ATP + H(+) = adenosine 5'-phosphosulfate + diphosphate. It functions in the pathway sulfur metabolism; hydrogen sulfide biosynthesis; sulfite from sulfate: step 1/3. In Desulforamulus reducens (strain ATCC BAA-1160 / DSM 100696 / MI-1) (Desulfotomaculum reducens), this protein is Sulfate adenylyltransferase.